A 353-amino-acid polypeptide reads, in one-letter code: Photosystem II D2 protein (353 aa).

The residue at position 2 (Thr-2) is an N-acetylthreonine. Thr-2 carries the post-translational modification Phosphothreonine. The chain crosses the membrane as a helical span at residues 41–61 (CAYFALGGWLTGTTFVTSWYT). His-118 provides a ligand contact to chlorophyll a. Residues 125–141 (GFMLRQFELARSVQLRP) traverse the membrane as a helical segment. Residues Gln-130 and Asn-143 each coordinate pheophytin a. Residues 153 to 166 (VFVSVFLIYPLGQS) form a helical membrane-spanning segment. His-198 serves as a coordination point for chlorophyll a. A helical transmembrane segment spans residues 208-228 (AALLCAIHGATVENTLFEDGD). Residues His-215 and Phe-262 each coordinate a plastoquinone. Residue His-215 participates in Fe cation binding. His-269 is a binding site for Fe cation. A helical membrane pass occupies residues 279–295 (GLWMSAIGVVGLALNLR).

Belongs to the reaction center PufL/M/PsbA/D family. As to quaternary structure, PSII is composed of 1 copy each of membrane proteins PsbA, PsbB, PsbC, PsbD, PsbE, PsbF, PsbH, PsbI, PsbJ, PsbK, PsbL, PsbM, PsbT, PsbX, PsbY, PsbZ, Psb30/Ycf12, at least 3 peripheral proteins of the oxygen-evolving complex and a large number of cofactors. It forms dimeric complexes. The D1/D2 heterodimer binds P680, chlorophylls that are the primary electron donor of PSII, and subsequent electron acceptors. It shares a non-heme iron and each subunit binds pheophytin, quinone, additional chlorophylls, carotenoids and lipids. There is also a Cl(-1) ion associated with D1 and D2, which is required for oxygen evolution. The PSII complex binds additional chlorophylls, carotenoids and specific lipids. is required as a cofactor.

It is found in the plastid. Its subcellular location is the chloroplast thylakoid membrane. It catalyses the reaction 2 a plastoquinone + 4 hnu + 2 H2O = 2 a plastoquinol + O2. Photosystem II (PSII) is a light-driven water:plastoquinone oxidoreductase that uses light energy to abstract electrons from H(2)O, generating O(2) and a proton gradient subsequently used for ATP formation. It consists of a core antenna complex that captures photons, and an electron transfer chain that converts photonic excitation into a charge separation. The D1/D2 (PsbA/PsbD) reaction center heterodimer binds P680, the primary electron donor of PSII as well as several subsequent electron acceptors. D2 is needed for assembly of a stable PSII complex. This Zygnema circumcarinatum (Green alga) protein is Photosystem II D2 protein.